Consider the following 1262-residue polypeptide: Cytoplasmic FMR1-interacting protein homolog (1262 aa).

A disordered region spans residues 519–550 (LNRMTDVKGKKKSSAPKGDSANSSSSDIRIPR).

The protein belongs to the CYFIP family. Interacts with gex-3.

The protein localises to the cytoplasm. In terms of biological role, required for initial steps of body morphogenesis. May play a role in egg laying and yolk protein clatherin-mediated endocytosis by oocytes during oogenesis. Plays a role in the formation of muscle connections, also called muscle arm extensions, between the body wall and the motor axons in the dorsal and ventral cord. This chain is Cytoplasmic FMR1-interacting protein homolog, found in Caenorhabditis elegans.